Reading from the N-terminus, the 75-residue chain is Sec-independent protein translocase protein TatA (75 aa).

Residues 1 to 21 form a helical membrane-spanning segment; the sequence is MGSFSIWHWLIVLVIVLLVFG. The tract at residues 41 to 75 is disordered; that stretch reads KGMHDDDKPAGKLGDDSRSAEQAREAQAERDRDAR.

It belongs to the TatA/E family. As to quaternary structure, the Tat system comprises two distinct complexes: a TatABC complex, containing multiple copies of TatA, TatB and TatC subunits, and a separate TatA complex, containing only TatA subunits. Substrates initially bind to the TatABC complex, which probably triggers association of the separate TatA complex to form the active translocon.

The protein localises to the cell inner membrane. Functionally, part of the twin-arginine translocation (Tat) system that transports large folded proteins containing a characteristic twin-arginine motif in their signal peptide across membranes. TatA could form the protein-conducting channel of the Tat system. This is Sec-independent protein translocase protein TatA from Xanthomonas campestris pv. campestris (strain 8004).